Here is a 446-residue protein sequence, read N- to C-terminus: Pre-rRNA-processing protein crb3/ipi3 (446 aa).

WD repeat units follow at residues 74-113 (ILPEILICVQSSPCGSWLAAGTEKGNLYIWSLKSGALIYF), 116-155 (AHYQPLTILKFSNDGMVLFTASNDGDVFAWLISTLVDQNS), 172-214 (GHKR…LLTT), 216-257 (ALPS…SNNV), and 294-333 (SCQSPITTLTVSFDASLLISGDKDGNVLVWDSVSRQVLRR).

This sequence belongs to the WD repeat IPI3/WDR18 family. Component of the RIX1 complex, composed of ipi1, rix1/ipi2 and crb3/ipi3 in a 1:2:2 stoichiometry. The complex interacts (via rix1) with mdn1 (via its hexameric AAA ATPase ring) and the pre-60S ribosome particles. Interacts with rix1, gcr3 and Las1.

The protein localises to the nucleus. It is found in the chromosome. Functionally, required for both pre-rRNA processing and heterochromatic gene silencing. Its function is as follows. Component of the RIX1 complex required for processing of ITS2 sequences from 35S pre-rRNA. This is Pre-rRNA-processing protein crb3/ipi3 (crb3) from Schizosaccharomyces pombe (strain 972 / ATCC 24843) (Fission yeast).